The sequence spans 477 residues: UDP-N-acetylmuramate--L-alanine ligase (477 aa).

115–121 (GTHGKTT) is a binding site for ATP.

This sequence belongs to the MurCDEF family.

The protein localises to the cytoplasm. It catalyses the reaction UDP-N-acetyl-alpha-D-muramate + L-alanine + ATP = UDP-N-acetyl-alpha-D-muramoyl-L-alanine + ADP + phosphate + H(+). It participates in cell wall biogenesis; peptidoglycan biosynthesis. Its function is as follows. Cell wall formation. This Gluconobacter oxydans (strain 621H) (Gluconobacter suboxydans) protein is UDP-N-acetylmuramate--L-alanine ligase.